The primary structure comprises 238 residues: Large ribosomal subunit protein uL1 (238 aa).

This sequence belongs to the universal ribosomal protein uL1 family. As to quaternary structure, part of the 50S ribosomal subunit.

Binds directly to 23S rRNA. The L1 stalk is quite mobile in the ribosome, and is involved in E site tRNA release. In terms of biological role, protein L1 is also a translational repressor protein, it controls the translation of the L11 operon by binding to its mRNA. The polypeptide is Large ribosomal subunit protein uL1 (Salinispora tropica (strain ATCC BAA-916 / DSM 44818 / JCM 13857 / NBRC 105044 / CNB-440)).